The chain runs to 83 residues: Neurotoxin LmNaTx3 (83 aa).

The N-terminal stretch at 1–21 (MQLKIQLLMLVLMIVLTDVYS) is a signal peptide. An LCN-type CS-alpha/beta domain is found at 22–83 (KDGFIVSKKN…NIAMKNKNYC (62 aa)). 4 cysteine pairs are disulfide-bonded: Cys32-Cys83, Cys36-Cys59, Cys45-Cys64, and Cys49-Cys66.

This sequence belongs to the long (4 C-C) scorpion toxin superfamily. Sodium channel inhibitor family. Alpha subfamily. As to expression, expressed by the venom gland.

The protein resides in the secreted. Functionally, binds voltage-independently at site-3 of voltage-gated sodium channels (Nav) and inhibits the inactivation of the activated channels, thereby blocking neuronal transmission. The protein is Neurotoxin LmNaTx3 of Lychas mucronatus (Chinese swimming scorpion).